The chain runs to 194 residues: Probable DNA-directed RNA polymerase subunit delta (194 aa).

Positions 14–83 (LSMIEVARAI…GENKWGLRSW (70 aa)) constitute an HTH HARE-type domain. Positions 117 to 194 (GDEDAIDYSD…SDDEEDEEGE (78 aa)) are disordered.

Belongs to the RpoE family. In terms of assembly, RNAP is composed of a core of 2 alpha, a beta and a beta' subunits. The core is associated with a delta subunit and one of several sigma factors.

In terms of biological role, participates in both the initiation and recycling phases of transcription. In the presence of the delta subunit, RNAP displays an increased specificity of transcription, a decreased affinity for nucleic acids, and an increased efficiency of RNA synthesis because of enhanced recycling. This chain is Probable DNA-directed RNA polymerase subunit delta, found in Streptococcus mutans serotype c (strain ATCC 700610 / UA159).